A 396-amino-acid polypeptide reads, in one-letter code: Phosphoglycerate kinase (396 aa).

Substrate-binding positions include 21-23, Arg-36, 59-62, Arg-118, and Arg-151; these read DFN and HFDR. Residues Lys-201, Glu-323, and 353 to 356 each bind ATP; that span reads GGDT.

It belongs to the phosphoglycerate kinase family. As to quaternary structure, monomer.

It localises to the cytoplasm. It catalyses the reaction (2R)-3-phosphoglycerate + ATP = (2R)-3-phospho-glyceroyl phosphate + ADP. It functions in the pathway carbohydrate degradation; glycolysis; pyruvate from D-glyceraldehyde 3-phosphate: step 2/5. This Caulobacter sp. (strain K31) protein is Phosphoglycerate kinase.